The following is a 303-amino-acid chain: Protoheme IX farnesyltransferase 2 (303 aa).

A run of 9 helical transmembrane segments spans residues 29 to 49 (VVALMLLTVLVGMCLSVPGIV), 51 to 71 (LQPLVAGMAGIAMMAGSAAAF), 96 to 118 (ISTTKAVTFAVSLGSLGFVVLYT), 123 to 143 (LTAWLTFASLIGYALVYTAYL), 150 to 170 (NIVIGGLAGAMPPLLGWTAIT), 177 to 197 (ALLLVIIIFTWTPPHFWALAI), 223 to 243 (CILLYTILLAIACLLPVLVGM), 244 to 264 (CGPIYLVGSTVLSCGFIYKAW), and 281 to 301 (FSIYHLMVLFIVLLVDHYFWV).

It belongs to the UbiA prenyltransferase family. Protoheme IX farnesyltransferase subfamily.

The protein resides in the cell inner membrane. The catalysed reaction is heme b + (2E,6E)-farnesyl diphosphate + H2O = Fe(II)-heme o + diphosphate. Its pathway is porphyrin-containing compound metabolism; heme O biosynthesis; heme O from protoheme: step 1/1. In terms of biological role, converts heme B (protoheme IX) to heme O by substitution of the vinyl group on carbon 2 of heme B porphyrin ring with a hydroxyethyl farnesyl side group. The sequence is that of Protoheme IX farnesyltransferase 2 from Shewanella frigidimarina (strain NCIMB 400).